Consider the following 132-residue polypeptide: Sirohydrochlorin cobaltochelatase (132 aa).

The Proton acceptor role is filled by His-10. Residue His-10 participates in Co(2+) binding. Residues Arg-46 and 69 to 74 (ISYGLH) contribute to the substrate site. A Co(2+)-binding site is contributed by His-74.

Belongs to the CbiX family. CbiXS subfamily. In terms of assembly, homotetramer; dimer of dimers.

It carries out the reaction Co-sirohydrochlorin + 2 H(+) = sirohydrochlorin + Co(2+). Its pathway is cofactor biosynthesis; adenosylcobalamin biosynthesis; cob(II)yrinate a,c-diamide from sirohydrochlorin (anaerobic route): step 1/10. Functionally, catalyzes the insertion of Co(2+) into sirohydrochlorin as part of the anaerobic pathway to cobalamin biosynthesis. This Archaeoglobus fulgidus (strain ATCC 49558 / DSM 4304 / JCM 9628 / NBRC 100126 / VC-16) protein is Sirohydrochlorin cobaltochelatase.